The following is a 160-amino-acid chain: Protein-export protein SecB (160 aa).

Belongs to the SecB family. Homotetramer, a dimer of dimers. One homotetramer interacts with 1 SecA dimer.

The protein resides in the cytoplasm. Functionally, one of the proteins required for the normal export of preproteins out of the cell cytoplasm. It is a molecular chaperone that binds to a subset of precursor proteins, maintaining them in a translocation-competent state. It also specifically binds to its receptor SecA. This is Protein-export protein SecB from Burkholderia lata (strain ATCC 17760 / DSM 23089 / LMG 22485 / NCIMB 9086 / R18194 / 383).